The chain runs to 569 residues: MAAAAPVAADDDERRRRPGAALEDSRPQEGANGEAELGELSRLRAELAGALAEMETMKAVAEVSESTKAEAVAAVQRQCQEEVASLQAILKDSISSYEAQITALKQERQQQQQDCEEKERELGRLKQLLSRAHPLDSLEKQMEKAHEDSEKLREIVLPMEKEIEELKAKLLRAEELIQEIQRRPQHVPSLHGSTELLPLSRDPSPPLEPLEELSGDGGPAAEAFAHNCDDSASISSFSLGGGVGSSSSLPRSRQGLSPEQEETASLVSTGTLVPEGIYLPPPGYQLVPDTQWEQLQMEGRQLQKDLESVSRERDELQEGLRRSNEDCAKQMQVLLAQVQNAEQLLRTLQGTVSQAQERVQLQMAELVTTHKCLHHEVKRLNEENQGLRAEQLPSSAPQGPQQEQGEEESLPSSVPELQQLLCRTRQEARAQLQAQEHGAERLRIEIVTLREALEEETAARASLEGQLRVQREETEVLEASLCSLRTEMERVQQEQSKPQLPDLLSEQRAKVLRLQAELETSEQVQRDFVRLSQALQVRLERIRQAETLEQVHSIMDEAPLTDVRDIKDT.

Disordered stretches follow at residues 1–38 (MAAAAPVAADDDERRRRPGAALEDSRPQEGANGEAELG), 181–267 (QRRP…ASLV), and 388–414 (RAEQLPSSAPQGPQQEQGEEESLPSSV). A2 bears the N-acetylalanine mark. Residues 29–38 (EGANGEAELG) are compositionally biased toward low complexity. Residues 34–184 (EAELGELSRL…ELIQEIQRRP (151 aa)) are a coiled coil. Residues S189, S193, S200, and S204 each carry the phosphoserine modification. Over residues 245 to 257 (SSSSLPRSRQGLS) the composition is skewed to low complexity. The stretch at 292–391 (WEQLQMEGRQ…EENQGLRAEQ (100 aa)) forms a coiled coil. Over residues 393 to 403 (PSSAPQGPQQE) the composition is skewed to low complexity. Residues 423-523 (RTRQEARAQL…LQAELETSEQ (101 aa)) are a coiled coil.

This sequence belongs to the rabaptin family. In terms of assembly, heterodimer with RABGEF1. The dimer binds RAB5A that has been activated by GTP-binding. Interacts with SDCCAG8; this interaction is important for ciliogenesis regulation. Interacts with RAB4; this interaction may mediate VEGFR2 cell surface expression.

It localises to the cytoplasm. Its subcellular location is the early endosome. The protein resides in the cytoskeleton. It is found in the microtubule organizing center. The protein localises to the centrosome. It localises to the cilium basal body. Its function is as follows. Plays a role in membrane trafficking and in homotypic early endosome fusion. Participates in arteriogenesis by regulating vascular endothelial growth factor receptor 2/VEGFR2 cell surface expression and endosomal trafficking. By interacting with SDCCAG8, localizes to centrosomes and plays a critical role in ciliogenesis. In Pongo abelii (Sumatran orangutan), this protein is Rab GTPase-binding effector protein 2 (RABEP2).